Reading from the N-terminus, the 405-residue chain is Tyrosine--tRNA ligase (405 aa).

Positions 46–55 match the 'HIGH' region motif; sequence PTRPDIHLGH. The 'KMSKS' region signature appears at 230 to 234; sequence KMSKS. K233 contacts ATP. The S4 RNA-binding domain occupies 341 to 404; the sequence is MGLAALMVKA…GKKKFVKIVV (64 aa).

It belongs to the class-I aminoacyl-tRNA synthetase family. TyrS type 2 subfamily. Homodimer.

The protein resides in the cytoplasm. The enzyme catalyses tRNA(Tyr) + L-tyrosine + ATP = L-tyrosyl-tRNA(Tyr) + AMP + diphosphate + H(+). Functionally, catalyzes the attachment of tyrosine to tRNA(Tyr) in a two-step reaction: tyrosine is first activated by ATP to form Tyr-AMP and then transferred to the acceptor end of tRNA(Tyr). The protein is Tyrosine--tRNA ligase of Bdellovibrio bacteriovorus (strain ATCC 15356 / DSM 50701 / NCIMB 9529 / HD100).